A 582-amino-acid polypeptide reads, in one-letter code: V-type ATP synthase alpha chain (582 aa).

231–238 contacts ATP; sequence GPFGSGKT.

The protein belongs to the ATPase alpha/beta chains family.

The enzyme catalyses ATP + H2O + 4 H(+)(in) = ADP + phosphate + 5 H(+)(out). Functionally, produces ATP from ADP in the presence of a proton gradient across the membrane. The V-type alpha chain is a catalytic subunit. The sequence is that of V-type ATP synthase alpha chain from Deinococcus deserti (strain DSM 17065 / CIP 109153 / LMG 22923 / VCD115).